The chain runs to 204 residues: N-(5'-phosphoribosyl)anthranilate isomerase (204 aa).

The protein belongs to the TrpF family.

The catalysed reaction is N-(5-phospho-beta-D-ribosyl)anthranilate = 1-(2-carboxyphenylamino)-1-deoxy-D-ribulose 5-phosphate. It functions in the pathway amino-acid biosynthesis; L-tryptophan biosynthesis; L-tryptophan from chorismate: step 3/5. The polypeptide is N-(5'-phosphoribosyl)anthranilate isomerase (Syntrophomonas wolfei subsp. wolfei (strain DSM 2245B / Goettingen)).